Consider the following 161-residue polypeptide: Regulator of ribonuclease activity A (161 aa).

Belongs to the RraA family. In terms of assembly, homotrimer. Binds to both RNA-binding sites in the C-terminal region of Rne and to RhlB.

It is found in the cytoplasm. Functionally, globally modulates RNA abundance by binding to RNase E (Rne) and regulating its endonucleolytic activity. Can modulate Rne action in a substrate-dependent manner by altering the composition of the degradosome. Modulates RNA-binding and helicase activities of the degradosome. In Idiomarina loihiensis (strain ATCC BAA-735 / DSM 15497 / L2-TR), this protein is Regulator of ribonuclease activity A.